A 332-amino-acid chain; its full sequence is Glyceraldehyde-3-phosphate dehydrogenase 2 (332 aa).

Residues 11 to 12, Asp-32, and Arg-77 each bind NAD(+); that span reads RI. D-glyceraldehyde 3-phosphate contacts are provided by residues 148-150, Thr-179, 208-209, and Arg-231; these read SCT and TG. Cys-149 functions as the Nucleophile in the catalytic mechanism. Asn-313 provides a ligand contact to NAD(+).

Belongs to the glyceraldehyde-3-phosphate dehydrogenase family. In terms of assembly, homotetramer.

The protein localises to the cytoplasm. The catalysed reaction is D-glyceraldehyde 3-phosphate + phosphate + NAD(+) = (2R)-3-phospho-glyceroyl phosphate + NADH + H(+). It participates in carbohydrate degradation; glycolysis; pyruvate from D-glyceraldehyde 3-phosphate: step 1/5. This is Glyceraldehyde-3-phosphate dehydrogenase 2 (Gapdh2) from Drosophila pseudoobscura pseudoobscura (Fruit fly).